A 416-amino-acid chain; its full sequence is UDP-N-acetylglucosamine 1-carboxyvinyltransferase (416 aa).

Position 22–23 (22–23 (KN)) interacts with phosphoenolpyruvate. Arg-92 contacts UDP-N-acetyl-alpha-D-glucosamine. Cys-116 functions as the Proton donor in the catalytic mechanism. Cys-116 is subject to 2-(S-cysteinyl)pyruvic acid O-phosphothioketal. Residues 121–125 (RPVDQ), Asp-304, and Ile-326 each bind UDP-N-acetyl-alpha-D-glucosamine.

Belongs to the EPSP synthase family. MurA subfamily.

The protein resides in the cytoplasm. It catalyses the reaction phosphoenolpyruvate + UDP-N-acetyl-alpha-D-glucosamine = UDP-N-acetyl-3-O-(1-carboxyvinyl)-alpha-D-glucosamine + phosphate. Its pathway is cell wall biogenesis; peptidoglycan biosynthesis. Cell wall formation. Adds enolpyruvyl to UDP-N-acetylglucosamine. The sequence is that of UDP-N-acetylglucosamine 1-carboxyvinyltransferase from Cupriavidus necator (strain ATCC 17699 / DSM 428 / KCTC 22496 / NCIMB 10442 / H16 / Stanier 337) (Ralstonia eutropha).